The primary structure comprises 264 residues: Putative ankyrin repeat domain-containing protein 19 (264 aa).

ANK repeat units lie at residues 67-96 (KDRTVLHLTCAHGRVEVVTLLLSRRCQINI), 100-129 (LNRTPLMKAVHCQEEACAIILLEHGANPNI), 133-162 (YSNTALHYAVYNKGTSLAEKLLSHHANIEA), 166-195 (EGNTPLLFAINSRRQQIVEFLLKNQANLHA), and 199-228 (FRRTALMLAVQHNSSSIVSLLLQQNINIFS).

This Homo sapiens (Human) protein is Putative ankyrin repeat domain-containing protein 19 (ANKRD19P).